The chain runs to 104 residues: Sweet protein mabinlin-3 (104 aa).

Cystine bridges form between Cys4–Cys53, Cys17–Cys42, Cys43–Cys91, and Cys55–Cys99.

This sequence belongs to the 2S seed storage albumins family. As to quaternary structure, heterodimer of a small A and a large B chain linked by disulfide bonds.

In terms of biological role, heat stable 2S seed storage protein having sweetness-inducing activity. The sequence is that of Sweet protein mabinlin-3 from Capparis masaikai (Mabinlang).